The chain runs to 73 residues: Putative membrane protein insertion efficiency factor (73 aa).

It belongs to the UPF0161 family.

It localises to the cell inner membrane. Functionally, could be involved in insertion of integral membrane proteins into the membrane. This Jannaschia sp. (strain CCS1) protein is Putative membrane protein insertion efficiency factor.